Consider the following 82-residue polypeptide: Omega-conotoxin-like Am6.2 (82 aa).

Residues 1 to 22 (MKLTCMMIVAVLFLTAWTFVTA) form the signal peptide. A propeptide spanning residues 23–52 (VPHSSNVLENLYLKARHEMENQEASKLNMR) is cleaved from the precursor. Intrachain disulfides connect Cys-56–Cys-73, Cys-63–Cys-77, and Cys-72–Cys-81. Residue Trp-76 is modified to 6'-bromotryptophan; partial; in Am6.2b (major form).

This sequence belongs to the conotoxin O1 family. In terms of processing, mostly non-hydroxylated. Two forms of this peptides have been described. Am6.2a (Am3136) is not unmodified, while Am6.2b (Am3214) is Trp-76 brominated. Both forms are found in venom with a much more abundant brominated form. Expressed by the venom duct.

Its subcellular location is the secreted. Omega-conotoxins act at presynaptic membranes, they bind and block voltage-gated calcium channels (Cav). The chain is Omega-conotoxin-like Am6.2 from Conus amadis (Amadis cone).